A 429-amino-acid chain; its full sequence is Enolase (429 aa).

Residue Gln163 participates in (2R)-2-phosphoglycerate binding. Glu205 (proton donor) is an active-site residue. Mg(2+) contacts are provided by Asp242, Glu286, and Asp313. (2R)-2-phosphoglycerate-binding residues include Lys338, Arg367, Ser368, and Lys389. Residue Lys338 is the Proton acceptor of the active site.

This sequence belongs to the enolase family. Requires Mg(2+) as cofactor.

Its subcellular location is the cytoplasm. The protein localises to the secreted. The protein resides in the cell surface. The enzyme catalyses (2R)-2-phosphoglycerate = phosphoenolpyruvate + H2O. The protein operates within carbohydrate degradation; glycolysis; pyruvate from D-glyceraldehyde 3-phosphate: step 4/5. Catalyzes the reversible conversion of 2-phosphoglycerate (2-PG) into phosphoenolpyruvate (PEP). It is essential for the degradation of carbohydrates via glycolysis. The chain is Enolase from Thermoanaerobacter sp. (strain X514).